A 427-amino-acid polypeptide reads, in one-letter code: Acetyl-CoA acetyltransferase, mitochondrial (427 aa).

A mitochondrion-targeting transit peptide spans 1–33 (MAVLAALLRGGARSRSPLLRRLVQEIRYVERSY). Residue Lys-66 is modified to N6-acetyllysine; alternate. The residue at position 66 (Lys-66) is an N6-succinyllysine; alternate. Lys-78 is modified (N6-succinyllysine). Cys-126 serves as the catalytic Acyl-thioester intermediate. An N6-acetyllysine; alternate mark is found at Lys-174, Lys-181, Lys-190, and Lys-202. 4 positions are modified to N6-succinyllysine; alternate: Lys-174, Lys-181, Lys-190, and Lys-202. Tyr-219 contributes to the CoA binding site. Tyr-219 is a binding site for K(+). N6-acetyllysine; alternate occurs at positions 223 and 230. An N6-succinyllysine; alternate mark is found at Lys-223 and Lys-230. Lys-243 carries the N6-succinyllysine modification. N6-acetyllysine occurs at positions 251 and 257. CoA-binding positions include 258-260 (RVD) and Lys-263. Position 263 is an N6-acetyllysine; alternate (Lys-263). N6-succinyllysine; alternate is present on Lys-263. Residues Lys-266 and Lys-268 each carry the N6-succinyllysine modification. Lys-273 is modified (N6-acetyllysine). K(+) contacts are provided by Ala-280, Ala-281, and Ala-283. A CoA-binding site is contributed by Ser-284. Lys-338 carries the post-translational modification N6-acetyllysine. A K(+)-binding site is contributed by Val-381. Cys-413 acts as the Proton donor/acceptor in catalysis.

Belongs to the thiolase-like superfamily. Thiolase family. As to quaternary structure, homotetramer. Succinylation at Lys-268, adjacent to a coenzyme A binding site. Desuccinylated by SIRT5.

Its subcellular location is the mitochondrion. It carries out the reaction 2 acetyl-CoA = acetoacetyl-CoA + CoA. The enzyme catalyses propanoyl-CoA + acetyl-CoA = 2-methyl-3-oxobutanoyl-CoA + CoA. It functions in the pathway lipid metabolism; fatty acid beta-oxidation. Its activity is regulated as follows. Activated by potassium ions, but not sodium ions. This is one of the enzymes that catalyzes the last step of the mitochondrial beta-oxidation pathway, an aerobic process breaking down fatty acids into acetyl-CoA. Using free coenzyme A/CoA, catalyzes the thiolytic cleavage of medium- to long-chain 3-oxoacyl-CoAs into acetyl-CoA and a fatty acyl-CoA shortened by two carbon atoms. The activity of the enzyme is reversible and it can also catalyze the condensation of two acetyl-CoA molecules into acetoacetyl-CoA. Thereby, it plays a major role in ketone body metabolism. This is Acetyl-CoA acetyltransferase, mitochondrial (ACAT1) from Macaca fascicularis (Crab-eating macaque).